A 161-amino-acid chain; its full sequence is Regulator of ribonuclease activity A (161 aa).

The protein belongs to the RraA family. Homotrimer. Binds to both RNA-binding sites in the C-terminal region of Rne and to RhlB.

The protein localises to the cytoplasm. Functionally, globally modulates RNA abundance by binding to RNase E (Rne) and regulating its endonucleolytic activity. Can modulate Rne action in a substrate-dependent manner by altering the composition of the degradosome. Modulates RNA-binding and helicase activities of the degradosome. The sequence is that of Regulator of ribonuclease activity A from Shigella boydii serotype 18 (strain CDC 3083-94 / BS512).